The chain runs to 342 residues: Dihydroorotase (342 aa).

Zn(2+) contacts are provided by His13 and His15. Residues 15-17 (HLR) and Asn41 each bind substrate. Zn(2+) contacts are provided by Lys98, His135, and His173. Position 98 is an N6-carboxylysine (Lys98). His135 contacts substrate. Leu218 is a binding site for substrate. Asp246 contacts Zn(2+). The active site involves Asp246. The substrate site is built by His250 and Ala262.

The protein belongs to the metallo-dependent hydrolases superfamily. DHOase family. Class II DHOase subfamily. In terms of assembly, homodimer. Zn(2+) is required as a cofactor.

It catalyses the reaction (S)-dihydroorotate + H2O = N-carbamoyl-L-aspartate + H(+). Its pathway is pyrimidine metabolism; UMP biosynthesis via de novo pathway; (S)-dihydroorotate from bicarbonate: step 3/3. Its function is as follows. Catalyzes the reversible cyclization of carbamoyl aspartate to dihydroorotate. The chain is Dihydroorotase from Vibrio cholerae serotype O1 (strain ATCC 39315 / El Tor Inaba N16961).